Reading from the N-terminus, the 293-residue chain is Probable chromosome 2-partitioning protein ParB (293 aa).

Belongs to the ParB family.

Involved in chromosome partition. Localize to both poles of the predivisional cell following completion of DNA replication. Binds to the DNA origin of replication. The polypeptide is Probable chromosome 2-partitioning protein ParB (parB2) (Deinococcus radiodurans (strain ATCC 13939 / DSM 20539 / JCM 16871 / CCUG 27074 / LMG 4051 / NBRC 15346 / NCIMB 9279 / VKM B-1422 / R1)).